The sequence spans 380 residues: Cytochrome b (380 aa).

Transmembrane regions (helical) follow at residues 34–54 (FGSLLGICLLTQILTGLLLAT), 78–99 (WLIRNLHANGASFFFICIYLHI), 114–134 (WNTGVILLLALMATAFVGYVL), and 179–199 (FFALHFLLPFMIAGLAFIHLT). The heme b site is built by H84 and H98. The heme b site is built by H183 and H197. An a ubiquinone-binding site is contributed by H202. A run of 4 helical transmembrane segments spans residues 227–247 (LKDILGFIIMFLPLTTLALFS), 289–309 (LGGVLALAASVLVLFLTPLLH), 321–341 (LSQLLFWTLVANLLILTWVGS), and 348–368 (FIIIGQLASLAYFTILLLLFP).

Belongs to the cytochrome b family. As to quaternary structure, the cytochrome bc1 complex contains 11 subunits: 3 respiratory subunits (MT-CYB, CYC1 and UQCRFS1), 2 core proteins (UQCRC1 and UQCRC2) and 6 low-molecular weight proteins (UQCRH/QCR6, UQCRB/QCR7, UQCRQ/QCR8, UQCR10/QCR9, UQCR11/QCR10 and a cleavage product of UQCRFS1). This cytochrome bc1 complex then forms a dimer. Requires heme b as cofactor.

Its subcellular location is the mitochondrion inner membrane. Component of the ubiquinol-cytochrome c reductase complex (complex III or cytochrome b-c1 complex) that is part of the mitochondrial respiratory chain. The b-c1 complex mediates electron transfer from ubiquinol to cytochrome c. Contributes to the generation of a proton gradient across the mitochondrial membrane that is then used for ATP synthesis. The sequence is that of Cytochrome b (MT-CYB) from Uria lomvia (Thick-billed murre).